The primary structure comprises 576 residues: Putative diflavin flavoprotein A 1 (576 aa).

Residues 48 to 240 form a zinc metallo-hydrolase region; it reads RNGTTYNSFL…LAIKTVATGH (193 aa). Positions 97, 99, 101, 164, 183, and 240 each coordinate Fe cation. The 163-residue stretch at 269–431 folds into the Flavodoxin-like domain; it reads VALFYAEDYG…DLEKALGRIS (163 aa). Residues 432-576 are flavodoxin-reductase-like; it reads TGLYIITTKK…VHHRKVGNHY (145 aa).

It in the N-terminal section; belongs to the zinc metallo-hydrolase group 3 family. In the C-terminal section; belongs to the flavodoxin reductase family. The cofactor is Fe cation.

In terms of biological role, mediates electron transfer from NADH to oxygen, reducing it to water. This modular protein has 3 redox cofactors, in other organisms the same activity requires 2 or 3 proteins. The protein is Putative diflavin flavoprotein A 1 (dfa1) of Nostoc sp. (strain PCC 7120 / SAG 25.82 / UTEX 2576).